The sequence spans 162 residues: Regulator of ribonuclease activity A (162 aa).

It belongs to the RraA family. In terms of assembly, homotrimer. Binds to both RNA-binding sites in the C-terminal region of Rne and to RhlB.

The protein resides in the cytoplasm. In terms of biological role, globally modulates RNA abundance by binding to RNase E (Rne) and regulating its endonucleolytic activity. Can modulate Rne action in a substrate-dependent manner by altering the composition of the degradosome. Modulates RNA-binding and helicase activities of the degradosome. The polypeptide is Regulator of ribonuclease activity A (Haemophilus influenzae (strain 86-028NP)).